The chain runs to 504 residues: Maturase K (504 aa).

This sequence belongs to the intron maturase 2 family. MatK subfamily.

It is found in the plastid. It localises to the chloroplast. In terms of biological role, usually encoded in the trnK tRNA gene intron. Probably assists in splicing its own and other chloroplast group II introns. The protein is Maturase K of Nepenthes distillatoria (Pitcher plant).